Here is a 100-residue protein sequence, read N- to C-terminus: Mercuric transport protein (100 aa).

2 consecutive transmembrane segments (helical) span residues 19–39 and 43–63; these read LAVVGVALLPIICCAGPVLLA and LAGLGGVLVSPWLLAPAAVLL. Cys-31 and Cys-32 together coordinate Hg(2+). Residues Cys-82 and Cys-83 each contribute to the Hg(2+) site.

It localises to the cell membrane. Its function is as follows. Involved in mercuric transport. Passes a mercury ion from the MerP protein to the mercuric reductase MerA. This chain is Mercuric transport protein (merT), found in Streptomyces lividans.